Here is a 500-residue protein sequence, read N- to C-terminus: L-arabinose isomerase (500 aa).

Residues glutamate 306, glutamate 333, histidine 350, and histidine 450 each coordinate Mn(2+).

The protein belongs to the arabinose isomerase family. Homohexamer. It depends on Mn(2+) as a cofactor.

It catalyses the reaction beta-L-arabinopyranose = L-ribulose. Its pathway is carbohydrate degradation; L-arabinose degradation via L-ribulose; D-xylulose 5-phosphate from L-arabinose (bacterial route): step 1/3. Catalyzes the conversion of L-arabinose to L-ribulose. This is L-arabinose isomerase from Escherichia fergusonii (strain ATCC 35469 / DSM 13698 / CCUG 18766 / IAM 14443 / JCM 21226 / LMG 7866 / NBRC 102419 / NCTC 12128 / CDC 0568-73).